A 552-amino-acid polypeptide reads, in one-letter code: Arginine--tRNA ligase (552 aa).

The 'HIGH' region signature appears at 124–134 (GNPTGPLHLAH).

It belongs to the class-I aminoacyl-tRNA synthetase family. In terms of assembly, monomer.

It localises to the cytoplasm. The enzyme catalyses tRNA(Arg) + L-arginine + ATP = L-arginyl-tRNA(Arg) + AMP + diphosphate. The chain is Arginine--tRNA ligase from Tropheryma whipplei (strain Twist) (Whipple's bacillus).